The sequence spans 785 residues: Protein SEY1 (785 aa).

Topologically, residues 1-690 are cytoplasmic; that stretch reads MTDLEVSAIQ…KRSVINSKTE (690 aa). Positions 40–266 constitute a GB1/RHD3-type G domain; sequence GLNYHIVSVF…SEDQLFNEGY (227 aa). Residue 50–57 coordinates GTP; it reads GSQSTGKS. The stretch at 451–479 forms a coiled coil; it reads PKLRELEEELSNLRTELVNKEQENIKTKI. Residues 691–711 traverse the membrane as a helical segment; sequence VPLYIYALLLVLGWNEFMIIL. The Lumenal portion of the chain corresponds to 712 to 714; sequence RNP. The helical transmembrane segment at 715-735 threads the bilayer; that stretch reads LLITLLLIGLTGLYLGYKTKL. The Cytoplasmic segment spans residues 736–785; sequence LGPIVQVVQAMIQELQDQAKNKLRDVLVSEPEAPSQVRIGKEVDATKDED.

The protein belongs to the TRAFAC class dynamin-like GTPase superfamily. GB1/RHD3 GTPase family. RHD3 subfamily.

The protein localises to the endoplasmic reticulum membrane. In terms of biological role, cooperates with the reticulon proteins and tubule-shaping DP1 family proteins to generate and maintain the structure of the tubular endoplasmic reticulum network. Has GTPase activity, which is required for its function in ER organization. The chain is Protein SEY1 from Komagataella phaffii (strain GS115 / ATCC 20864) (Yeast).